A 616-amino-acid chain; its full sequence is Dihydroxy-acid dehydratase (616 aa).

D81 is a binding site for Mg(2+). A [2Fe-2S] cluster-binding site is contributed by C122. 2 residues coordinate Mg(2+): D123 and K124. K124 carries the post-translational modification N6-carboxylysine. A [2Fe-2S] cluster-binding site is contributed by C195. Mg(2+) is bound at residue E491. S517 (proton acceptor) is an active-site residue.

This sequence belongs to the IlvD/Edd family. In terms of assembly, homodimer. It depends on [2Fe-2S] cluster as a cofactor. Mg(2+) is required as a cofactor.

It carries out the reaction (2R)-2,3-dihydroxy-3-methylbutanoate = 3-methyl-2-oxobutanoate + H2O. The catalysed reaction is (2R,3R)-2,3-dihydroxy-3-methylpentanoate = (S)-3-methyl-2-oxopentanoate + H2O. Its pathway is amino-acid biosynthesis; L-isoleucine biosynthesis; L-isoleucine from 2-oxobutanoate: step 3/4. It functions in the pathway amino-acid biosynthesis; L-valine biosynthesis; L-valine from pyruvate: step 3/4. In terms of biological role, functions in the biosynthesis of branched-chain amino acids. Catalyzes the dehydration of (2R,3R)-2,3-dihydroxy-3-methylpentanoate (2,3-dihydroxy-3-methylvalerate) into 2-oxo-3-methylpentanoate (2-oxo-3-methylvalerate) and of (2R)-2,3-dihydroxy-3-methylbutanoate (2,3-dihydroxyisovalerate) into 2-oxo-3-methylbutanoate (2-oxoisovalerate), the penultimate precursor to L-isoleucine and L-valine, respectively. The polypeptide is Dihydroxy-acid dehydratase (Photorhabdus laumondii subsp. laumondii (strain DSM 15139 / CIP 105565 / TT01) (Photorhabdus luminescens subsp. laumondii)).